The following is a 409-amino-acid chain: Dual-specificity RNA methyltransferase RlmN (409 aa).

Glu126 functions as the Proton acceptor in the catalytic mechanism. One can recognise a Radical SAM core domain in the interval 132–373; it reads EEGRGTLCLS…NQAGYASPIR (242 aa). Cys139 and Cys384 form a disulfide bridge. The [4Fe-4S] cluster site is built by Cys146, Cys150, and Cys153. Residues 210–211, Ser242, 264–266, and Asn341 each bind S-adenosyl-L-methionine; these read GE and SLH. Cys384 acts as the S-methylcysteine intermediate in catalysis.

The protein belongs to the radical SAM superfamily. RlmN family. [4Fe-4S] cluster is required as a cofactor.

The protein localises to the cytoplasm. The enzyme catalyses adenosine(2503) in 23S rRNA + 2 reduced [2Fe-2S]-[ferredoxin] + 2 S-adenosyl-L-methionine = 2-methyladenosine(2503) in 23S rRNA + 5'-deoxyadenosine + L-methionine + 2 oxidized [2Fe-2S]-[ferredoxin] + S-adenosyl-L-homocysteine. It catalyses the reaction adenosine(37) in tRNA + 2 reduced [2Fe-2S]-[ferredoxin] + 2 S-adenosyl-L-methionine = 2-methyladenosine(37) in tRNA + 5'-deoxyadenosine + L-methionine + 2 oxidized [2Fe-2S]-[ferredoxin] + S-adenosyl-L-homocysteine. Specifically methylates position 2 of adenine 2503 in 23S rRNA and position 2 of adenine 37 in tRNAs. m2A2503 modification seems to play a crucial role in the proofreading step occurring at the peptidyl transferase center and thus would serve to optimize ribosomal fidelity. This Bartonella quintana (strain Toulouse) (Rochalimaea quintana) protein is Dual-specificity RNA methyltransferase RlmN.